A 327-amino-acid chain; its full sequence is Short chain isoprenyl diphosphate synthase (327 aa).

Positions 48, 51, and 80 each coordinate isopentenyl diphosphate. Mg(2+) contacts are provided by Asp87 and Asp91. An an all-trans-polyprenyl diphosphate-binding site is contributed by Arg96. Isopentenyl diphosphate is bound at residue Arg97. Lys176, Thr177, Gln214, Lys231, and Lys241 together coordinate an all-trans-polyprenyl diphosphate.

This sequence belongs to the FPP/GGPP synthase family. Homodimer. Requires Mg(2+) as cofactor.

It localises to the cytoplasm. In Methanocaldococcus jannaschii (strain ATCC 43067 / DSM 2661 / JAL-1 / JCM 10045 / NBRC 100440) (Methanococcus jannaschii), this protein is Short chain isoprenyl diphosphate synthase (idsA).